The primary structure comprises 513 residues: 2,3-bisphosphoglycerate-independent phosphoglycerate mutase (513 aa).

Mn(2+) contacts are provided by Asp-13 and Ser-63. The Phosphoserine intermediate role is filled by Ser-63. Residues His-124, 154-155 (RD), Arg-186, Arg-192, 262-265 (RADR), and Lys-335 contribute to the substrate site. Mn(2+)-binding residues include Asp-402, His-406, Asp-443, His-444, and His-462.

The protein belongs to the BPG-independent phosphoglycerate mutase family. In terms of assembly, monomer. Mn(2+) serves as cofactor.

The catalysed reaction is (2R)-2-phosphoglycerate = (2R)-3-phosphoglycerate. It functions in the pathway carbohydrate degradation; glycolysis; pyruvate from D-glyceraldehyde 3-phosphate: step 3/5. Functionally, catalyzes the interconversion of 2-phosphoglycerate and 3-phosphoglycerate. The chain is 2,3-bisphosphoglycerate-independent phosphoglycerate mutase from Shewanella frigidimarina (strain NCIMB 400).